We begin with the raw amino-acid sequence, 292 residues long: Probable ABC transporter permease protein PH1215 (292 aa).

Transmembrane regions (helical) follow at residues I10–V30, L72–L92, I106–Y126, I160–I180, L215–L235, and F261–P281. An ABC transmembrane type-1 domain is found at L68–Y284.

This sequence belongs to the binding-protein-dependent transport system permease family. MalFG subfamily.

Its subcellular location is the cell membrane. In terms of biological role, probably part of a binding-protein-dependent transport system PH1214/15/16. Probably responsible for the translocation of the substrate across the membrane. The protein is Probable ABC transporter permease protein PH1215 of Pyrococcus horikoshii (strain ATCC 700860 / DSM 12428 / JCM 9974 / NBRC 100139 / OT-3).